The following is a 465-amino-acid chain: NADH-quinone oxidoreductase subunit N (465 aa).

Transmembrane regions (helical) follow at residues 9 to 29 (FNFV…VLLL), 44 to 64 (ASII…GFVL), 73 to 93 (LFVS…FSML), 110 to 130 (FLFM…IVIF), 159 to 179 (YFTL…FVYL), 198 to 218 (PILL…LSIA), 235 to 255 (FIAF…LRIF), 265 to 285 (EYIV…VALI), 292 to 312 (MLAY…VSSM), 327 to 347 (IFAL…IFLI), 371 to 391 (IMLA…IFWG), 405 to 427 (YALV…KILI), and 444 to 464 (VKQK…VFLL).

Belongs to the complex I subunit 2 family. NDH-1 is composed of 14 different subunits. Subunits NuoA, H, J, K, L, M, N constitute the membrane sector of the complex.

The protein localises to the cell inner membrane. It carries out the reaction a quinone + NADH + 5 H(+)(in) = a quinol + NAD(+) + 4 H(+)(out). Its function is as follows. NDH-1 shuttles electrons from NADH, via FMN and iron-sulfur (Fe-S) centers, to quinones in the respiratory chain. The immediate electron acceptor for the enzyme in this species is believed to be ubiquinone. Couples the redox reaction to proton translocation (for every two electrons transferred, four hydrogen ions are translocated across the cytoplasmic membrane), and thus conserves the redox energy in a proton gradient. The protein is NADH-quinone oxidoreductase subunit N of Campylobacter lari (strain RM2100 / D67 / ATCC BAA-1060).